Consider the following 331-residue polypeptide: MTIKVGINGFGRIGRIVFRAAQKRSDIEIVAINDLLDADYMAYMLKYDSTHGRFDGTVEVKDGHLIVNGKKIRVTAERDPANLKWDEVGVDVVAEATGIFLTDETARKHITAGAKKVVLTGPSKDNTPMFVKGANFDKYAGQDIVSNASCTTNCLAPLAKVINDNFGIIEGLMTTVHATTATQKTVDGPSHKDWRGGRGASQNIIPSSTGAAKAVGKVLPELNGKLTGMAFRVPTPNVSVVDLTVRLEKPATYEQIKAAVKAAAEGEMKGVLGYTEDDVVSTDFNGEVCTSVFDAKAGIALNDNFVKLVSWYDNETGYSNKVLDLIAHISK.

NAD(+) contacts are provided by residues 12 to 13 (RI), Asp-34, Arg-78, and Thr-120. D-glyceraldehyde 3-phosphate contacts are provided by residues 149 to 151 (SCT), Thr-180, 209 to 210 (TG), and Arg-232. Cys-150 (nucleophile) is an active-site residue. Residue Asn-314 participates in NAD(+) binding.

The protein belongs to the glyceraldehyde-3-phosphate dehydrogenase family. Homotetramer.

The protein localises to the cytoplasm. The enzyme catalyses D-glyceraldehyde 3-phosphate + phosphate + NAD(+) = (2R)-3-phospho-glyceroyl phosphate + NADH + H(+). It functions in the pathway carbohydrate degradation; glycolysis; pyruvate from D-glyceraldehyde 3-phosphate: step 1/5. Its function is as follows. Catalyzes the oxidative phosphorylation of glyceraldehyde 3-phosphate (G3P) to 1,3-bisphosphoglycerate (BPG) using the cofactor NAD. The first reaction step involves the formation of a hemiacetal intermediate between G3P and a cysteine residue, and this hemiacetal intermediate is then oxidized to a thioester, with concomitant reduction of NAD to NADH. The reduced NADH is then exchanged with the second NAD, and the thioester is attacked by a nucleophilic inorganic phosphate to produce BPG. The chain is Glyceraldehyde-3-phosphate dehydrogenase (gapA) from Escherichia fergusonii (strain ATCC 35469 / DSM 13698 / CCUG 18766 / IAM 14443 / JCM 21226 / LMG 7866 / NBRC 102419 / NCTC 12128 / CDC 0568-73).